The primary structure comprises 513 residues: MQLSPSEISGLIKQRIEKFDNSVELKSEGTIVSVADGIVTIYGLNDVAAGEMIKLPGDVYGLALNLNTDSVGAVVLGDYEHIKEGDKAYCIGRILEVPVGEALLGRVVDALGNPIDGKGEVATDLTSPIEKIAPGVIWRKSVDQALQTGIKSIDSMVPIGRGQRELIIGDRQIGKTAIAVDTIINQKGTGVKCIYVAIGQKASTIANIVRQLEEHGAMEHTIIVAATASDSAALQYIAPYAGCSMGEYFRDRGQDALIVYDDLTKQAWAYRQISLLLRRPPGREAYPGDVFYLHSRLLERAARVNEEYVEKFTNGEVKGKTGSLTALPIIETQAGDISAFVPTNVISITDGQIFLETDLFNSGLRPAINPGNSVSRVGGAAQTKIIKKLGGGIRLALAQYRELEAFSQFASDLDEATRAQLNRGQRVTELLKQKQFSTLSVALMALSLYAADNGYLDNLEVSEVIPFESALHALAETKYSDVIAEINETGKYDADIADKLKIIVEDCKANQAW.

169 to 176 (GDRQIGKT) contacts ATP.

It belongs to the ATPase alpha/beta chains family. F-type ATPases have 2 components, CF(1) - the catalytic core - and CF(0) - the membrane proton channel. CF(1) has five subunits: alpha(3), beta(3), gamma(1), delta(1), epsilon(1). CF(0) has three main subunits: a(1), b(2) and c(9-12). The alpha and beta chains form an alternating ring which encloses part of the gamma chain. CF(1) is attached to CF(0) by a central stalk formed by the gamma and epsilon chains, while a peripheral stalk is formed by the delta and b chains.

Its subcellular location is the cell inner membrane. The enzyme catalyses ATP + H2O + 4 H(+)(in) = ADP + phosphate + 5 H(+)(out). Its function is as follows. Produces ATP from ADP in the presence of a proton gradient across the membrane. The alpha chain is a regulatory subunit. The sequence is that of ATP synthase subunit alpha from Francisella tularensis subsp. tularensis (strain WY96-3418).